The primary structure comprises 203 residues: Urease accessory protein UreG (203 aa).

13–20 (GPVGSGKT) contacts GTP.

It belongs to the SIMIBI class G3E GTPase family. UreG subfamily. As to quaternary structure, homodimer. UreD, UreF and UreG form a complex that acts as a GTP-hydrolysis-dependent molecular chaperone, activating the urease apoprotein by helping to assemble the nickel containing metallocenter of UreC. The UreE protein probably delivers the nickel.

Its subcellular location is the cytoplasm. Facilitates the functional incorporation of the urease nickel metallocenter. This process requires GTP hydrolysis, probably effectuated by UreG. This chain is Urease accessory protein UreG, found in Psychromonas ingrahamii (strain DSM 17664 / CCUG 51855 / 37).